Reading from the N-terminus, the 807-residue chain is Glycerol-3-phosphate acyltransferase (807 aa).

The HXXXXD motif motif lies at 308-313 (CHRSHM).

It belongs to the GPAT/DAPAT family.

It localises to the cell inner membrane. The catalysed reaction is sn-glycerol 3-phosphate + an acyl-CoA = a 1-acyl-sn-glycero-3-phosphate + CoA. The protein operates within phospholipid metabolism; CDP-diacylglycerol biosynthesis; CDP-diacylglycerol from sn-glycerol 3-phosphate: step 1/3. This is Glycerol-3-phosphate acyltransferase from Shewanella loihica (strain ATCC BAA-1088 / PV-4).